Here is a 256-residue protein sequence, read N- to C-terminus: Probable succinate transporter subunit YjjP (256 aa).

Residues 1 to 113 (MQTEQQRAVT…KRFSQIQPLR (113 aa)) lie on the Cytoplasmic side of the membrane. Residues 114–135 (YPRWLVALMVGLSCACFCKLNN) form a helical membrane-spanning segment. Topologically, residues 136–140 (GGWDG) are periplasmic. Residues 141–158 (AVITFFASTTAMYIRQLL) form a helical membrane-spanning segment. The Cytoplasmic portion of the chain corresponds to 159-168 (AQRHLHPQIN). The chain crosses the membrane as a helical span at residues 169-189 (FCLTAFAATTISGLLLQLPTF). Topologically, residues 190-194 (SNTPT) are periplasmic. A helical transmembrane segment spans residues 195-215 (IAMAASVLLLVPGFPLINAVA). Residues 216-228 (DMFKGHINTGLAR) lie on the Cytoplasmic side of the membrane. Residues 229–249 (WAIASLLTLATCVGVVMALTI) traverse the membrane as a helical segment. Over 250-256 (WGLRGWV) the chain is Periplasmic.

The protein belongs to the ThrE exporter (TC 2.A.79) family. The transporter is composed of YjjB and YjjP.

The protein localises to the cell inner membrane. In terms of biological role, involved in succinate export with YjjB. Both proteins are required for export. Contributes to succinate production under both aerobic and anaerobic conditions. This Escherichia coli (strain K12) protein is Probable succinate transporter subunit YjjP (yjjP).